A 523-amino-acid chain; its full sequence is 2-isopropylmalate synthase (523 aa).

The 263-residue stretch at 5–267 folds into the Pyruvate carboxyltransferase domain; sequence VIIFDTTLRD…HTAINHQEIW (263 aa). Mn(2+) is bound by residues Asp-14, His-202, His-204, and Asn-238. A regulatory domain region spans residues 392 to 523; it reads RLDYFSVQSS…QHNENNKETV (132 aa).

It belongs to the alpha-IPM synthase/homocitrate synthase family. LeuA type 1 subfamily. As to quaternary structure, homodimer. It depends on Mn(2+) as a cofactor.

The protein resides in the cytoplasm. The catalysed reaction is 3-methyl-2-oxobutanoate + acetyl-CoA + H2O = (2S)-2-isopropylmalate + CoA + H(+). It functions in the pathway amino-acid biosynthesis; L-leucine biosynthesis; L-leucine from 3-methyl-2-oxobutanoate: step 1/4. In terms of biological role, catalyzes the condensation of the acetyl group of acetyl-CoA with 3-methyl-2-oxobutanoate (2-ketoisovalerate) to form 3-carboxy-3-hydroxy-4-methylpentanoate (2-isopropylmalate). This chain is 2-isopropylmalate synthase, found in Shigella dysenteriae serotype 1 (strain Sd197).